We begin with the raw amino-acid sequence, 418 residues long: Putative ion-transport protein YfeO (418 aa).

10 consecutive transmembrane segments (helical) span residues 15 to 37, 57 to 79, 99 to 118, 149 to 171, 186 to 208, 221 to 243, 258 to 280, 301 to 323, 343 to 363, and 376 to 398; these read PAVAIGIASSLILIVVMKIASVL, LWIIGVLTLTGIAVGLVIRFSQG, ALPRLIVALILGLAGGVSLG, ILASAGTIGALFGTPVAAALIFS, LFAPLMAAAAGALTTGLFFHPHF, TDILSGAIVAAIAIAAGMVAVWC, VLVLGIGGFILGILGVIGGPVSL, YFLLAVIKLAALVVAAASGFRGG, VPAVPAAITVSCAILGIVLVV, and VVVPNTTLLPLLCIVMLPAWLLL.

This sequence belongs to the chloride channel (TC 2.A.49) family.

Its subcellular location is the cell membrane. The protein is Putative ion-transport protein YfeO (yfeO) of Shigella flexneri.